A 344-amino-acid polypeptide reads, in one-letter code: tRNA N6-adenosine threonylcarbamoyltransferase (344 aa).

2 residues coordinate Fe cation: H116 and H120. Residues 138-142 (LVSGG), D171, G184, D188, and N277 each bind substrate. D307 provides a ligand contact to Fe cation.

The protein belongs to the KAE1 / TsaD family. Fe(2+) serves as cofactor.

The protein resides in the cytoplasm. The enzyme catalyses L-threonylcarbamoyladenylate + adenosine(37) in tRNA = N(6)-L-threonylcarbamoyladenosine(37) in tRNA + AMP + H(+). Its function is as follows. Required for the formation of a threonylcarbamoyl group on adenosine at position 37 (t(6)A37) in tRNAs that read codons beginning with adenine. Is involved in the transfer of the threonylcarbamoyl moiety of threonylcarbamoyl-AMP (TC-AMP) to the N6 group of A37, together with TsaE and TsaB. TsaD likely plays a direct catalytic role in this reaction. This is tRNA N6-adenosine threonylcarbamoyltransferase from Latilactobacillus sakei subsp. sakei (strain 23K) (Lactobacillus sakei subsp. sakei).